Here is a 614-residue protein sequence, read N- to C-terminus: Ankyrin repeat domain-containing protein 55 (614 aa).

Positions 1–20 (MMRQATMDFSTPSVFDQQRG) are disordered. Polar residues predominate over residues 7–16 (MDFSTPSVFD). ANK repeat units lie at residues 26 to 55 (VDLT…SILE), 60 to 89 (EGCT…NINM), 93 to 125 (YGRT…IPDK), 126 to 157 (NGRL…EINH), 161 to 190 (EGMT…DPTL), 194 to 223 (DFKT…GPSI), 230 to 260 (SGKT…NLQA), 264 to 293 (DDRT…DSNL), and 297 to 326 (NEST…TEPT). Disordered stretches follow at residues 319–339 (QESR…PQKK), 354–375 (KKEE…EEDT), 454–476 (TSHA…SRSE), and 564–614 (RNNL…SDEN). The segment covering 354-373 (KKEEQRAHQKDPSRDRYREE) has biased composition (basic and acidic residues). Residue serine 475 is modified to Phosphoserine.

In Homo sapiens (Human), this protein is Ankyrin repeat domain-containing protein 55 (ANKRD55).